A 205-amino-acid chain; its full sequence is Guanylate kinase (205 aa).

A Guanylate kinase-like domain is found at 7–185; the sequence is GNIFIISAAS…AEGDLLHIVN (179 aa). 14-21 provides a ligand contact to ATP; that stretch reads AASGTGKT.

Belongs to the guanylate kinase family.

It localises to the cytoplasm. It carries out the reaction GMP + ATP = GDP + ADP. Its function is as follows. Essential for recycling GMP and indirectly, cGMP. The sequence is that of Guanylate kinase from Neisseria gonorrhoeae (strain ATCC 700825 / FA 1090).